A 133-amino-acid polypeptide reads, in one-letter code: Aspartate 1-decarboxylase (133 aa).

Ser-26 serves as the catalytic Schiff-base intermediate with substrate; via pyruvic acid. A Pyruvic acid (Ser) modification is found at Ser-26. Thr-58 serves as a coordination point for substrate. Tyr-59 functions as the Proton donor in the catalytic mechanism. Substrate is bound at residue 74–76 (GAA).

This sequence belongs to the PanD family. In terms of assembly, heterooctamer of four alpha and four beta subunits. Pyruvate is required as a cofactor. Post-translationally, is synthesized initially as an inactive proenzyme, which is activated by self-cleavage at a specific serine bond to produce a beta-subunit with a hydroxyl group at its C-terminus and an alpha-subunit with a pyruvoyl group at its N-terminus.

It localises to the cytoplasm. The catalysed reaction is L-aspartate + H(+) = beta-alanine + CO2. The protein operates within cofactor biosynthesis; (R)-pantothenate biosynthesis; beta-alanine from L-aspartate: step 1/1. Catalyzes the pyruvoyl-dependent decarboxylation of aspartate to produce beta-alanine. The sequence is that of Aspartate 1-decarboxylase from Legionella pneumophila (strain Lens).